Consider the following 382-residue polypeptide: tRNA-queuosine alpha-mannosyltransferase (382 aa).

Belongs to the glycosyltransferase group 1 family. Glycosyltransferase 4 subfamily.

The protein resides in the cytoplasm. It is found in the nucleus. It catalyses the reaction queuosine(34) in tRNA(Asp) + GDP-alpha-D-mannose = O-4''-alpha-D-mannosylqueuosine(34) in tRNA(Asp) + GDP + H(+). In terms of biological role, glycosyltransferase that specifically catalyzes mannosylation of cytoplasmic tRNA(Asp) modified with queuosine at position 34 (queuosine(34)). Mannosylates the cyclopentene moiety of queuosine(34) in tRNA(Asp) to form mannosyl-queuosine(34). Mannosylation of queuosine(34) in tRNA(Asp) is required to slow-down elongation at cognate codons, GAC and GAU, thereby regulating protein translation. This Gallus gallus (Chicken) protein is tRNA-queuosine alpha-mannosyltransferase (GTDC1).